A 294-amino-acid chain; its full sequence is Transmembrane protein 178B (294 aa).

Residues 1-23 (MAAGRLLLYTGLSLALCALGMLA) form the signal peptide. 2 N-linked (GlcNAc...) asparagine glycosylation sites follow: Asn-148 and Asn-152. 3 helical membrane-spanning segments follow: residues 172–192 (AGFM…GVLG), 206–226 (LLFL…VAGI), and 252–272 (MFCA…CTLA).

This sequence belongs to the TMEM178 family.

It is found in the membrane. The polypeptide is Transmembrane protein 178B (TMEM178B) (Homo sapiens (Human)).